Reading from the N-terminus, the 513-residue chain is MQKFEGYSEKQKSRQHYFVYPLLFQEYIYAFAHDYGLNGSEPVEIFGCNNKKFSSILVKRLIIRMYQQNFLINSVNYPNQDRLFDHRNYFYSEFYSQILSEGFGIVVEIPLSLGQLSCPEEKEIPKFQNLQSIHSIFPFLEDKFLHLHYLSHIEIPYPIHLEILVQLLEYRIQDVPSLHLLRFFLHYYSNWNSLITSMKSIFLLKKENQRLFRFLYNSYVSEYEFFLLFLRKQSSCLRLTSSGTFLERIIFSGKMEHFGVMYPGFFRKTIWFFMDPLMHYVRYQGKAILASKGTLLLKKKWKSYLVNFSQYFFYFWTQPQRIRLNQLTNSCFDFLGYLSSVPINTLLVRNQMLENSFLIDTRMKKFNTTVPATPLVGSLSKAQFCTGSGHPISKPVWTDLSDWDILDRFGRICRNLFHYYSGSSKKQTLYRLKYILRLSCARTLARKHKSTVRTFMQRLGSVFLEEFFTEEEQVFSLMFTKTIHFSFHGSQSERIWYLDIIRINDLVNPLTLN.

Belongs to the intron maturase 2 family. MatK subfamily.

It is found in the plastid. Its subcellular location is the chloroplast. Its function is as follows. Usually encoded in the trnK tRNA gene intron. Probably assists in splicing its own and other chloroplast group II introns. This is Maturase K from Saccharum officinarum (Sugarcane).